The chain runs to 29 residues: Glucagon (29 aa).

The protein belongs to the glucagon family.

The protein resides in the secreted. Its function is as follows. Promotes hydrolysis of glycogen and lipids, and raises the blood sugar level. In Torpedo marmorata (Marbled electric ray), this protein is Glucagon (gcg).